The primary structure comprises 429 residues: Serine--tRNA ligase (429 aa).

235–237 (TAE) is an L-serine binding site. An ATP-binding site is contributed by 266–268 (RSE). Residue Glu-289 participates in L-serine binding. An ATP-binding site is contributed by 353–356 (EISS). Residue Ser-389 coordinates L-serine.

Belongs to the class-II aminoacyl-tRNA synthetase family. Type-1 seryl-tRNA synthetase subfamily. Homodimer. The tRNA molecule binds across the dimer.

The protein localises to the cytoplasm. The catalysed reaction is tRNA(Ser) + L-serine + ATP = L-seryl-tRNA(Ser) + AMP + diphosphate + H(+). It catalyses the reaction tRNA(Sec) + L-serine + ATP = L-seryl-tRNA(Sec) + AMP + diphosphate + H(+). The protein operates within aminoacyl-tRNA biosynthesis; selenocysteinyl-tRNA(Sec) biosynthesis; L-seryl-tRNA(Sec) from L-serine and tRNA(Sec): step 1/1. Functionally, catalyzes the attachment of serine to tRNA(Ser). Is also able to aminoacylate tRNA(Sec) with serine, to form the misacylated tRNA L-seryl-tRNA(Sec), which will be further converted into selenocysteinyl-tRNA(Sec). This chain is Serine--tRNA ligase, found in Histophilus somni (strain 129Pt) (Haemophilus somnus).